We begin with the raw amino-acid sequence, 352 residues long: Bifunctional protein FolD 1, mitochondrial (352 aa).

A mitochondrion-targeting transit peptide spans 1 to 23; sequence MLMIARKALASAHTKAFRLATRD.

Belongs to the tetrahydrofolate dehydrogenase/cyclohydrolase family. Homodimer.

Its subcellular location is the mitochondrion. The catalysed reaction is (6R)-5,10-methylene-5,6,7,8-tetrahydrofolate + NADP(+) = (6R)-5,10-methenyltetrahydrofolate + NADPH. It catalyses the reaction (6R)-5,10-methenyltetrahydrofolate + H2O = (6R)-10-formyltetrahydrofolate + H(+). It participates in one-carbon metabolism; tetrahydrofolate interconversion. In terms of biological role, catalyzes the oxidation of 5,10-methylenetetrahydrofolate to 5,10-methenyltetrahydrofolate and then the hydrolysis of 5,10-methenyltetrahydrofolate to 10-formyltetrahydrofolate. This Arabidopsis thaliana (Mouse-ear cress) protein is Bifunctional protein FolD 1, mitochondrial (FOLD1).